The primary structure comprises 101 residues: Large ribosomal subunit protein bL21 (101 aa).

The protein belongs to the bacterial ribosomal protein bL21 family. As to quaternary structure, part of the 50S ribosomal subunit. Contacts protein L20.

This protein binds to 23S rRNA in the presence of protein L20. The sequence is that of Large ribosomal subunit protein bL21 from Corynebacterium aurimucosum (strain ATCC 700975 / DSM 44827 / CIP 107346 / CN-1) (Corynebacterium nigricans).